The chain runs to 345 residues: Phosphoribosylformylglycinamidine cyclo-ligase (345 aa).

Belongs to the AIR synthase family.

It is found in the cytoplasm. The enzyme catalyses 2-formamido-N(1)-(5-O-phospho-beta-D-ribosyl)acetamidine + ATP = 5-amino-1-(5-phospho-beta-D-ribosyl)imidazole + ADP + phosphate + H(+). Its pathway is purine metabolism; IMP biosynthesis via de novo pathway; 5-amino-1-(5-phospho-D-ribosyl)imidazole from N(2)-formyl-N(1)-(5-phospho-D-ribosyl)glycinamide: step 2/2. This is Phosphoribosylformylglycinamidine cyclo-ligase from Enterobacter sp. (strain 638).